We begin with the raw amino-acid sequence, 168 residues long: Peptide deformylase 1 (168 aa).

Residues cysteine 92 and histidine 134 each contribute to the Fe cation site. The active site involves glutamate 135. Histidine 138 is a Fe cation binding site.

The protein belongs to the polypeptide deformylase family. It depends on Fe(2+) as a cofactor.

It carries out the reaction N-terminal N-formyl-L-methionyl-[peptide] + H2O = N-terminal L-methionyl-[peptide] + formate. Functionally, removes the formyl group from the N-terminal Met of newly synthesized proteins. Requires at least a dipeptide for an efficient rate of reaction. N-terminal L-methionine is a prerequisite for activity but the enzyme has broad specificity at other positions. The protein is Peptide deformylase 1 of Pseudomonas syringae pv. tomato (strain ATCC BAA-871 / DC3000).